Consider the following 1180-residue polypeptide: Protocadherin-12 (1180 aa).

The N-terminal stretch at 1-17 (MMLLLPFLLGLLGPGSY) is a signal peptide. At 18–716 (LFISGDCQEV…HEPGVLSTPA (699 aa)) the chain is on the extracellular side. Cadherin domains are found at residues 28–135 (ATVM…QPQF), 136–244 (PKDE…SPVF), 245–352 (AESS…APSI), 355–460 (TWAS…APVF), and 461–565 (EKSR…APEV). Residues Asn265 and Asn415 are each glycosylated (N-linked (GlcNAc...) asparagine). Residues Asn582, Asn659, and Asn662 are each glycosylated (N-linked (GlcNAc...) asparagine). The Cadherin 6 domain occupies 600–711 (PAGTGIPPKA…LRDSAHEPGV (112 aa)). Residues 717–737 (LALICLAVLLAIFGLLLALFV) form a helical membrane-spanning segment. Residues 738–1180 (SICRTERKDN…ESRLGCGRNL (443 aa)) lie on the Cytoplasmic side of the membrane. Disordered regions lie at residues 857 to 930 (NASR…GPHQ) and 973 to 1026 (QFQP…PEED). Ser859 carries the phosphoserine modification. Residues 904–918 (PASSATLRRQRNFNG) show a composition bias toward polar residues. Acidic residues predominate over residues 1014–1026 (PDLEEGPPSPEED). Phosphoserine is present on Ser1064. Residues 1076–1093 (SSPDATTSEEPRTFQTFG) show a composition bias toward polar residues. Disordered stretches follow at residues 1076–1104 (SSPDATTSEEPRTFQTFGKTVGPGPELSP) and 1156–1180 (SGASASEAQGRKKAAESRLGCGRNL).

Post-translationally, N-glycosylated. Cleaved by ADAM10 close to the transmembrane domain to release the Protocadherin-12, secreted form in the serum. Cleavage results in reduced cellular adhesion in a cell migration assay. In terms of tissue distribution, expressed in endothelial cells: localizes in vasculogenic rather than angiogenic endothelium. Strongly expressed in a subset of invasive cells of the placenta, named glycogen-rich trophoblasts cells (at protein level). glycogen-rich trophoblasts cells originate from the from the ectoplacental cone where they rapidly form tight islets (at protein level). In adult mice, present at high level in mesangial cells of kidney glomeruli, while expression was not detected in other types of perivascular cells.

The protein resides in the cell membrane. The protein localises to the cell junction. It is found in the secreted. Its function is as follows. Cellular adhesion molecule that may play an important role in cell-cell interactions at interendothelial junctions. Acts as a regulator of cell migration, probably via increasing cell-cell adhesion. Promotes homotypic calcium-dependent aggregation and adhesion and clusters at intercellular junctions. Unable to bind to catenins, weakly associates with the cytoskeleton. The protein is Protocadherin-12 of Mus musculus (Mouse).